The sequence spans 342 residues: Methionine import ATP-binding protein MetN (342 aa).

The 240-residue stretch at 2–241 folds into the ABC transporter domain; it reads ITLEQVTKIY…PQQPITKRFV (240 aa). ATP is bound at residue 38–45; that stretch reads GYSGAGKS.

This sequence belongs to the ABC transporter superfamily. Methionine importer (TC 3.A.1.24) family. The complex is composed of two ATP-binding proteins (MetN), two transmembrane proteins (MetI) and a solute-binding protein (MetQ).

The protein resides in the cell membrane. The enzyme catalyses L-methionine(out) + ATP + H2O = L-methionine(in) + ADP + phosphate + H(+). It catalyses the reaction D-methionine(out) + ATP + H2O = D-methionine(in) + ADP + phosphate + H(+). In terms of biological role, part of the ABC transporter complex MetNIQ involved in methionine import. Responsible for energy coupling to the transport system. The chain is Methionine import ATP-binding protein MetN from Geobacillus kaustophilus (strain HTA426).